We begin with the raw amino-acid sequence, 138 residues long: Putative pre-16S rRNA nuclease (138 aa).

Belongs to the YqgF nuclease family.

It is found in the cytoplasm. Its function is as follows. Could be a nuclease involved in processing of the 5'-end of pre-16S rRNA. The chain is Putative pre-16S rRNA nuclease from Carboxydothermus hydrogenoformans (strain ATCC BAA-161 / DSM 6008 / Z-2901).